The chain runs to 396 residues: Subtilisin-like protease 5 (396 aa).

An N-terminal signal peptide occupies residues 1–20 (MTGFFTILSFSLAALSVTNA). A propeptide spanning residues 21–116 (AQILSVPKGA…VEPDAIISQH (96 aa)) is cleaved from the precursor. The region spanning 37 to 113 (YIVVMKDDTS…VAFVEPDAII (77 aa)) is the Inhibitor I9 domain. N-linked (GlcNAc...) asparagine glycosylation is present at Asn-63. In terms of domain architecture, Peptidase S8 spans 125-396 (PWGLSRLSNR…TRLLYNGSGR (272 aa)). Active-site charge relay system residues include Asp-156 and His-187. Asn-230 and Asn-248 each carry an N-linked (GlcNAc...) asparagine glycan. The Charge relay system role is filled by Ser-342. The span at 377 to 389 (TIRNPGPDTTTRL) shows a compositional bias: polar residues. The disordered stretch occupies residues 377–396 (TIRNPGPDTTTRLLYNGSGR). Asn-392 is a glycosylation site (N-linked (GlcNAc...) asparagine).

The protein belongs to the peptidase S8 family.

It is found in the secreted. In terms of biological role, secreted subtilisin-like serine protease with keratinolytic activity that contributes to pathogenicity. The sequence is that of Subtilisin-like protease 5 (SUB5) from Arthroderma benhamiae (Trichophyton mentagrophytes).